A 591-amino-acid polypeptide reads, in one-letter code: Metalloendopeptidase OPG085 (591 aa).

His41 serves as a coordination point for Zn(2+). Glu44 is a catalytic residue. His45 and Glu112 together coordinate Zn(2+).

Belongs to the peptidase M44 family. The cofactor is Zn(2+). Undergoes proteolytic processing during the course of infection. May be cleaved into 46 kDa and 22 kDa products (Potential).

It is found in the virion. In terms of biological role, probably involved in maturation of some viral proteins by processing them preferentially at Ala-Gly-|-Ser/Thr/Lys motifs. Does not seem to be responsible for the cleavage of major core proteins. In Homo sapiens (Human), this protein is Metalloendopeptidase OPG085 (OPG085).